Consider the following 393-residue polypeptide: Sedoheptulose-1,7-bisphosphatase, chloroplastic (393 aa).

Residues Cys115 and Cys120 are joined by a disulfide bond. Positions 126, 155, 176, 178, and 179 each coordinate Mg(2+). Substrate-binding positions include 179–182 (DGSS), Tyr290, and Lys320. Mg(2+) is bound at residue Glu326.

The protein belongs to the FBPase class 1 family. As to quaternary structure, homodimer. Requires Mg(2+) as cofactor.

The protein resides in the plastid. Its subcellular location is the chloroplast. The catalysed reaction is D-sedoheptulose 1,7-bisphosphate + H2O = D-sedoheptulose 7-phosphate + phosphate. It participates in carbohydrate biosynthesis; Calvin cycle. The chain is Sedoheptulose-1,7-bisphosphatase, chloroplastic from Triticum aestivum (Wheat).